The following is a 529-amino-acid chain: Tyrosine-protein kinase Fgr (529 aa).

Residue Gly2 is the site of N-myristoyl glycine attachment. Residues Cys3 and Cys6 are each lipidated (S-palmitoyl cysteine). At Tyr34 the chain carries Phosphotyrosine. The SH3 domain maps to Ile77 to Ser138. The SH2 domain occupies Trp144–Cys241. Tyr208 bears the Phosphotyrosine mark. Residue Ser218 is modified to Phosphoserine. The Protein kinase domain occupies Ile263 to Phe516. ATP contacts are provided by residues Leu269–Val277 and Lys291. The active-site Proton acceptor is Asp382. A Phosphotyrosine modification is found at Tyr412. At Tyr523 the chain carries Phosphotyrosine; by SRC.

It belongs to the protein kinase superfamily. Tyr protein kinase family. SRC subfamily. As to quaternary structure, interacts with ITGB1, ITGB2, MS4A2/FCER1B, FCER1G, FCGR2A and/or FCGR2B. Interacts (via SH2 domain) with SYK (tyrosine phosphorylated). Interacts (via SH2 domain) with FLT3 (tyrosine phosphorylated). Interacts with PTK2/FAK1. Interacts (via SH2 domain) with HCLS1 (tyrosine phosphorylated by SYK). Interacts with SIRPA and PTPNS1. Interacts (not phosphorylated on tyrosine residues) with CBL; FGR tyrosine phosphorylation promotes dissociation. Interacts with PIK3R1 and FASLG. Interacts with CLNK. Ubiquitinated. Becomes ubiquitinated in response to ITGB2 signaling; this does not lead to degradation. In terms of processing, phosphorylated. Autophosphorylated on tyrosine residues. Becomes phosphorylated in response to FCGR2A and/or FCGR2B engagement, cell adhesion and signaling by ITGB2. Prior phosphorylation at Tyr-523 by SRC inhibits ulterior autophosphorylation at Tyr-412. As to expression, detected in neutrophils, monocytes and natural killer cells (at protein level). Detected in monocytes and large lymphocytes.

It localises to the cell membrane. The protein resides in the cell projection. It is found in the ruffle membrane. Its subcellular location is the cytoplasm. The protein localises to the cytosol. It localises to the cytoskeleton. The protein resides in the mitochondrion inner membrane. It is found in the mitochondrion intermembrane space. The catalysed reaction is L-tyrosyl-[protein] + ATP = O-phospho-L-tyrosyl-[protein] + ADP + H(+). With respect to regulation, activated by autophosphorylation. Prior phosphorylation at Tyr-523 by SRC inhibits ulterior autophosphorylation at Tyr-412. Activated by phorbol myristate acetate, phosphatidic acid and poly-Lys. Binding (via SH2 domain) of HCLS1 that is already phosphorylated by SYK strongly increases kinase activity. Functionally, non-receptor tyrosine-protein kinase that transmits signals from cell surface receptors devoid of kinase activity and contributes to the regulation of immune responses, including neutrophil, monocyte, macrophage and mast cell functions, cytoskeleton remodeling in response to extracellular stimuli, phagocytosis, cell adhesion and migration. Promotes mast cell degranulation, release of inflammatory cytokines and IgE-mediated anaphylaxis. Acts downstream of receptors that bind the Fc region of immunoglobulins, such as MS4A2/FCER1B, FCGR2A and/or FCGR2B. Acts downstream of ITGB1 and ITGB2, and regulates actin cytoskeleton reorganization, cell spreading and adhesion. Depending on the context, activates or inhibits cellular responses. Functions as a negative regulator of ITGB2 signaling, phagocytosis and SYK activity in monocytes. Required for normal ITGB1 and ITGB2 signaling, normal cell spreading and adhesion in neutrophils and macrophages. Functions as a positive regulator of cell migration and regulates cytoskeleton reorganization via RAC1 activation. Phosphorylates SYK (in vitro) and promotes SYK-dependent activation of AKT1 and MAP kinase signaling. Phosphorylates PLD2 in antigen-stimulated mast cells, leading to PLD2 activation and the production of the signaling molecules lysophosphatidic acid and diacylglycerol. Promotes activation of PIK3R1. Phosphorylates FASLG, and thereby regulates its ubiquitination and subsequent internalization. Phosphorylates ABL1. Promotes phosphorylation of CBL, CTTN, PIK3R1, PTK2/FAK1, PTK2B/PYK2 and VAV2. Phosphorylates HCLS1 that has already been phosphorylated by SYK, but not unphosphorylated HCLS1. Together with CLNK, it acts as a negative regulator of natural killer cell-activating receptors and inhibits interferon-gamma production. This Homo sapiens (Human) protein is Tyrosine-protein kinase Fgr (FGR).